Here is a 302-residue protein sequence, read N- to C-terminus: Acetylglutamate kinase (302 aa).

Residues 68–69 (GG), Arg90, and Asn195 each bind substrate.

The protein belongs to the acetylglutamate kinase family. ArgB subfamily.

It localises to the cytoplasm. The catalysed reaction is N-acetyl-L-glutamate + ATP = N-acetyl-L-glutamyl 5-phosphate + ADP. The protein operates within amino-acid biosynthesis; L-arginine biosynthesis; N(2)-acetyl-L-ornithine from L-glutamate: step 2/4. Functionally, catalyzes the ATP-dependent phosphorylation of N-acetyl-L-glutamate. The protein is Acetylglutamate kinase of Marinomonas sp. (strain MWYL1).